A 365-amino-acid chain; its full sequence is tRNA/tmRNA (uracil-C(5))-methyltransferase (365 aa).

The S-adenosyl-L-methionine site is built by glutamine 189, tyrosine 217, asparagine 222, glutamate 238, and aspartate 298. Catalysis depends on cysteine 323, which acts as the Nucleophile. Glutamate 357 functions as the Proton acceptor in the catalytic mechanism.

The protein belongs to the class I-like SAM-binding methyltransferase superfamily. RNA M5U methyltransferase family. TrmA subfamily.

The catalysed reaction is uridine(54) in tRNA + S-adenosyl-L-methionine = 5-methyluridine(54) in tRNA + S-adenosyl-L-homocysteine + H(+). It carries out the reaction uridine(341) in tmRNA + S-adenosyl-L-methionine = 5-methyluridine(341) in tmRNA + S-adenosyl-L-homocysteine + H(+). Dual-specificity methyltransferase that catalyzes the formation of 5-methyluridine at position 54 (m5U54) in all tRNAs, and that of position 341 (m5U341) in tmRNA (transfer-mRNA). This chain is tRNA/tmRNA (uracil-C(5))-methyltransferase, found in Shewanella sp. (strain ANA-3).